A 279-amino-acid chain; its full sequence is Ribosomal RNA small subunit methyltransferase I (279 aa).

It belongs to the methyltransferase superfamily. RsmI family.

It localises to the cytoplasm. It carries out the reaction cytidine(1402) in 16S rRNA + S-adenosyl-L-methionine = 2'-O-methylcytidine(1402) in 16S rRNA + S-adenosyl-L-homocysteine + H(+). Catalyzes the 2'-O-methylation of the ribose of cytidine 1402 (C1402) in 16S rRNA. In Synechocystis sp. (strain ATCC 27184 / PCC 6803 / Kazusa), this protein is Ribosomal RNA small subunit methyltransferase I.